The following is a 483-amino-acid chain: MMAAAPIQQNGTHTGVPIDLDPPDSRKRPLEAPPEAGSTKRTNTGEDGQYFLKVLIPSYAAGSIIGKGGQTIVQLQKETGATIKLSKSKDFYPGTTERVCLIQGTVEALNAVHGFIAEKIREMPQNVAKTEPVSILQPQTTVNPDRIKQVKIIVPNSTAGLIIGKGGATVKAIMEQSGAWVQLSQKPDGINLQERVVTVSGEPEQNRKAVELIIQKIQEDPQSGSCLNISYANVTGPVANSNPTGSPYANTAEVLPTAAAAAGLLGHANLAGVAAFPAVLSGFTGNDLVAITSALNTLASYGYNLNTLGLGLSQAAATGALAAAAASANPAAAAANLLATYASEASASGSTAGGTAGTFALGSLAAATAATNGYFGAASPLAASAILGTEKSTDGSKDVVEIAVPENLVGAILGKGGKTLVEYQELTGARIQISKKGEFVPGTRNRKVTITGTPAATQAAQYLITQRITYEQGVRAANPQKVG.

The tract at residues 1-44 (MMAAAPIQQNGTHTGVPIDLDPPDSRKRPLEAPPEAGSTKRTNT) is disordered. Positions 27-43 (KRPLEAPPEAGSTKRTN) match the Bipartite nuclear localization signal motif. 3 KH domains span residues 49–116 (QYFL…HGFI), 147–213 (IKQV…VELI), and 397–464 (KDVV…QYLI). The segment at 395–479 (GSKDVVEIAV…YEQGVRAANP (85 aa)) is required for RNA binding.

In terms of assembly, interacts with PTBP2; the interaction is direct.

The protein resides in the nucleus. Functionally, functions to regulate alternative splicing in neurons by binding pre-mRNA in a sequence-specific manner to activate exon inclusion or exclusion. It binds specifically to the sequences 5'-YCAY-3' and regulates splicing in only a subset of regulated exons. Binding to an exonic 5'-YCAY-3' cluster changes the protein complexes assembled on pre-mRNA, blocking U1 snRNP binding and exon inclusion, whereas binding to an intronic 5'-YCAY-3' cluster enhances spliceosome assembly and exon inclusion. Binding to 5'-YCAY-3' clusters results in a local and asymmetric action to regulate spliceosome assembly and alternative splicing in neurons. Binding to an exonic 5'-YCAY-3' cluster changed the protein complexes assembled on pre-mRNA, blocking U1 snRNP (small nuclear ribonucleoprotein) binding and exon inclusion, whereas binding to an intronic 5'-YCAY-3' cluster enhanced spliceosome assembly and exon inclusion. With NOVA1, they perform unique biological functions in different brain areas and cell types. Autoregulates its own expression by acting as a splicing repressor. Acts to activate the inclusion of exon E3A in the glycine receptor alpha-2 chain and of exon E9 in gamma-aminobutyric-acid receptor gamma-2 subunit via a distal downstream UCAU-rich intronic splicing enhancer. Acts to regulate a novel glycine receptor alpha-2 chain splice variant (alpha-2N) in developing spinal cord. This chain is RNA-binding protein Nova-1 (NOVA1), found in Macaca fascicularis (Crab-eating macaque).